A 651-amino-acid polypeptide reads, in one-letter code: Histone-lysine N-methyltransferase family member SUVH2 (651 aa).

The segment at 1 to 28 (MSTLLPFPDLNLMPDSQSSTAGTTAGDT) is disordered. Over residues 15–28 (DSQSSTAGTTAGDT) the composition is skewed to low complexity. Residues 202–358 (DKHIVGPVTG…KFRLVRIEGQ (157 aa)) form the YDG domain. In terms of domain architecture, Pre-SET spans 434–492 (TGCECKLSCTDDCLCARKNGGEFAYDDNGHLLKGKHVVFECGEFCTCGPSCKSRVTQKG). Residues Cys436, Cys438, Cys442, Cys446, Cys448, Cys474, Cys478, Cys480, and Cys484 each coordinate Zn(2+). Positions 495–638 (NRLEVFRSKE…PLAELSLDYG (144 aa)) constitute an SET domain.

The protein belongs to the class V-like SAM-binding methyltransferase superfamily. Histone-lysine methyltransferase family. Suvar3-9 subfamily. In terms of assembly, self-interacts. Interacts with DNA-directed RNA polymerase V subunit NRPE1 and with DRD1 and DMS3. Binds to MORC1/CRT1. In terms of tissue distribution, expressed at low levels in leaves stems and flowers.

It localises to the nucleus. The protein resides in the chromosome. The protein localises to the centromere. In terms of biological role, histone methyltransferase family member that plays a central role in gene silencing. Together with MORC6 and SUVH9, regulates the silencing of some transposable elements (TEs). According to PubMed:15775980, it is required for normal methylation of 'Lys-9' and 'Lys-27' of histone H3, 'Lys-20' of H4, and cytosine, but PubMed:19043555 see no significant effect on histone methylation when the gene is mutated. According to PubMed:19043555, the protein does not bind S-adenosyl-L-methionine and lacks methyltransferase activity. Instead, it may function downstream of DRM2 in RNA-directed DNA methylation, binding to methylated DNA and recruiting DNA-directed RNA polymerase V to chromatin. The polypeptide is Histone-lysine N-methyltransferase family member SUVH2 (SUVH2) (Arabidopsis thaliana (Mouse-ear cress)).